Reading from the N-terminus, the 136-residue chain is Orexigenic neuropeptide QRFP (136 aa).

The signal sequence occupies residues 1 to 18 (MVRPYPLIYFLFLPLGAC). The propeptide occupies 19-90 (FPLLDRREPT…HAGCRFRFGR (72 aa)). Glutamine 91 is subject to Pyrrolidone carboxylic acid. Position 133 is a phenylalanine amide (phenylalanine 133).

Belongs to the RFamide neuropeptide family. As to quaternary structure, ligand for the G-protein coupled receptor QRFPR/GPR103. In terms of tissue distribution, expressed widely in the brain with highest expression levels in the cerebellum, medulla, pituitary, retina, vestibular nucleus, and white matter. Also expressed in the bladder, colon, coronary artery, parathyroid gland, prostate, testis, and thyroid.

Its subcellular location is the secreted. Its function is as follows. Stimulates feeding behavior, metabolic rate and locomotor activity and increases blood pressure. May have orexigenic activity. May promote aldosterone secretion by the adrenal gland. The polypeptide is Orexigenic neuropeptide QRFP (Homo sapiens (Human)).